We begin with the raw amino-acid sequence, 729 residues long: Monosaccharide-sensing protein 3 (729 aa).

Helical transmembrane passes span 5 to 25 (VLVA…NATI), 46 to 66 (GLIV…SGPV), 81 to 101 (VLYF…VLLF), 104 to 124 (LLDG…ISET), 135 to 155 (TFPQ…VFGM), and 165 to 185 (LMLG…AFFL). The interval 337 to 372 (QESQWDPERNNEDSSDQDENLNSPLLSPQTTEPDDY) is disordered. Polar residues predominate over residues 356–367 (NLNSPLLSPQTT). Ser446 is modified (phosphoserine). Helical transmembrane passes span 511–531 (ALMV…NGVM), 557–577 (ASLL…LVSM), 581–601 (MLST…GSLV), 610–630 (LIST…FGAI), 650–670 (ICAL…PVML), and 673–693 (IGIA…WVFV).

This sequence belongs to the major facilitator superfamily. Sugar transporter (TC 2.A.1.1) family. Weakly expressed.

It is found in the vacuole membrane. The enzyme catalyses D-glucose(out) + H(+)(in) = D-glucose(in) + H(+)(out). The catalysed reaction is sucrose(out) + H(+)(in) = sucrose(in) + H(+)(out). Sugar proton-coupled antiporter which contributes to vacuolar sugar import (e.g. monosaccharides including glucose,sucrose and fructose), particularly during stress responses (e.g. in response to cold). The protein is Monosaccharide-sensing protein 3 of Arabidopsis thaliana (Mouse-ear cress).